The sequence spans 134 residues: Late embryogenesis abundant protein 6 (134 aa).

Basic and acidic residues predominate over residues 31 to 45 (ERAMARTKEEKEIAH). 2 disordered regions span residues 31–53 (ERAM…AKEA) and 80–134 (VTDH…HHHY). A coiled-coil region spans residues 34–70 (MARTKEEKEIAHQRRKAKEAEANMDMHMAKAAHAEDK). A compositionally biased stretch (low complexity) spans 115–127 (PPQTYHPTYPPTG).

The protein belongs to the LEA type 1 family.

Functionally, involved dehydration tolerance. Involved in the adaptive response of vascular plants to withstand water deficit. May possess chaperone-like activity under water deficit. The polypeptide is Late embryogenesis abundant protein 6 (Arabidopsis thaliana (Mouse-ear cress)).